The chain runs to 208 residues: Fucoxanthin-chlorophyll a-c binding protein, chloroplastic (208 aa).

The N-terminal 31 residues, 1 to 31, are a transit peptide targeting the chloroplast; sequence MMTLASLPSTAIAGLASAAPKVQPRMAANDE. Residues 102-118 form a helical membrane-spanning segment; that stretch reads IPQLPYWLWIVMTIGIG.

It belongs to the fucoxanthin chlorophyll protein family. As to quaternary structure, the LHC complex of chromophytic algae is composed of fucoxanthin, chlorophyll A and C bound non-covalently by fucoxanthin chlorophyll proteins (FCPs). The ratio of pigments in this LHC is; fucoxanthin: chlorophyll C: chlorophyll A; (0.6-1): (0.1-0.3): (1).

It localises to the plastid. The protein resides in the chloroplast thylakoid membrane. Its function is as follows. The light-harvesting complex (LHC) functions as a light receptor, it captures and delivers excitation energy to photosystems with which it is closely associated. Energy is transferred from the carotenoid and chlorophyll C (or B) to chlorophyll A and the photosynthetic reaction centers where it is used to synthesize ATP and reducing power. This Isochrysis galbana (Marine planktonic alga) protein is Fucoxanthin-chlorophyll a-c binding protein, chloroplastic (FCP).